A 330-amino-acid chain; its full sequence is mRNA-capping enzyme (330 aa).

Lys82 (N6-GMP-lysine intermediate) is an active-site residue.

Belongs to the eukaryotic GTase family. In terms of assembly, monomer. Mg(2+) serves as cofactor. The cofactor is Mn(2+).

The catalysed reaction is a 5'-end diphospho-ribonucleoside in mRNA + GTP + H(+) = a 5'-end (5'-triphosphoguanosine)-ribonucleoside in mRNA + diphosphate. Its function is as follows. mRNA capping. Transfers a GMP cap onto the end of mRNA that terminates with a 5'-diphosphate tail. This Chlorella (PBCV-1) protein is mRNA-capping enzyme.